The sequence spans 314 residues: BTB/POZ domain-containing protein KCTD17 (314 aa).

The BTB domain maps to lysine 24–lysine 94. Residues serine 190 to leucine 268 form a disordered region. The stretch at serine 196 to glutamine 239 forms a coiled coil. A compositionally biased stretch (acidic residues) spans glutamate 208 to valine 225.

In terms of assembly, homopentamer; forms a closed pentamer. Interacts with CUL3; interaction is direct and forms a 5:5 heterodecamer. Interacts with TCHP. Interacts with CUL3, as part of the BCR(KCTD17) E3 ubiquitin ligase complex, at least composed of CUL3, KCTD17 and RBX1. As to expression, highly expressed in brain. Highest expression is observed in the putamen and the thalamus.

It localises to the cytoplasm. Substrate-adapter for CUL3-RING ubiquitin ligase complexes which mediates the ubiquitination and subsequent proteasomal degradation of TCHP, a protein involved in ciliogenesis down-regulation. Thereby, positively regulates ciliogenesis, playing a crucial role in the initial steps of axoneme extension. May also play a role in endoplasmic reticulum calcium ion homeostasis. In Homo sapiens (Human), this protein is BTB/POZ domain-containing protein KCTD17.